The sequence spans 422 residues: Imidazolonepropionase (422 aa).

Fe(3+)-binding residues include His-82 and His-84. His-82 and His-84 together coordinate Zn(2+). Arg-91, Tyr-154, and His-187 together coordinate 4-imidazolone-5-propanoate. Position 154 (Tyr-154) interacts with N-formimidoyl-L-glutamate. His-252 serves as a coordination point for Fe(3+). His-252 is a binding site for Zn(2+). Glu-255 is a 4-imidazolone-5-propanoate binding site. A Fe(3+)-binding site is contributed by Asp-327. A Zn(2+)-binding site is contributed by Asp-327. Asn-329 and Gly-331 together coordinate N-formimidoyl-L-glutamate. Ser-332 is a 4-imidazolone-5-propanoate binding site.

This sequence belongs to the metallo-dependent hydrolases superfamily. HutI family. The cofactor is Zn(2+). It depends on Fe(3+) as a cofactor.

It localises to the cytoplasm. It carries out the reaction 4-imidazolone-5-propanoate + H2O = N-formimidoyl-L-glutamate. Its pathway is amino-acid degradation; L-histidine degradation into L-glutamate; N-formimidoyl-L-glutamate from L-histidine: step 3/3. Catalyzes the hydrolytic cleavage of the carbon-nitrogen bond in imidazolone-5-propanoate to yield N-formimidoyl-L-glutamate. It is the third step in the universal histidine degradation pathway. In Alkaliphilus oremlandii (strain OhILAs) (Clostridium oremlandii (strain OhILAs)), this protein is Imidazolonepropionase.